Here is a 972-residue protein sequence, read N- to C-terminus: 116 kDa U5 small nuclear ribonucleoprotein component (972 aa).

The tract at residues 1–53 (MDTDLYDEFGNYIGPELDSDDEDDELGRESKELDELEDDDDDDDMGDHDEDHP) is disordered. Composition is skewed to acidic residues over residues 17–26 (LDSDDEDDEL) and 34–48 (DELE…MGDH). Residues 127–409 (ELIRNVTLCG…GIHLTKEELK (283 aa)) form the tr-type G domain. GTP contacts are provided by residues 136 to 143 (GHLHHGKT), 204 to 208 (DTPGH), and 258 to 261 (NKID).

It belongs to the TRAFAC class translation factor GTPase superfamily. Classic translation factor GTPase family. EF-G/EF-2 subfamily. As to quaternary structure, component of the U5 snRNP and the U4/U6-U5 tri-snRNP complex, a building block of the spliceosome. Component of the pre-catalytic, catalytic and post-catalytic spliceosome complexes. Component of the minor spliceosome, which splices U12-type introns.

Its subcellular location is the nucleus. Its function is as follows. Required for pre-mRNA splicing as component of the spliceosome, including pre-catalytic, catalytic and post-catalytic spliceosomal complexes. Component of the U5 snRNP and the U4/U6-U5 tri-snRNP complex, a building block of the spliceosome. As a component of the minor spliceosome, involved in the splicing of U12-type introns in pre-mRNAs. The protein is 116 kDa U5 small nuclear ribonucleoprotein component (EFTUD2) of Gallus gallus (Chicken).